A 431-amino-acid polypeptide reads, in one-letter code: Serine/threonine-protein kinase Sgk1 (431 aa).

The necessary for localization to the mitochondria stretch occupies residues 1–60 (MTVKTEAARDTLTYSRMRGMVAILIAFMKQRRMGLNDFIQKIANNSYACKHPEVQSILKI). A disordered region spans residues 64 to 92 (QEPELMNANPSPPPSPSQQINLGPSSNPH). Phosphoserine is present on Ser-74. The residue at position 78 (Ser-78) is a Phosphoserine; by MAPK7. Over residues 81–91 (QQINLGPSSNP) the composition is skewed to polar residues. The Protein kinase domain maps to 98 to 355 (FHFLKVIGKG…FMEIKNHVFF (258 aa)). ATP contacts are provided by residues 104 to 112 (IGKGSFGKV) and Lys-127. Positions 131–141 (KKAILKKKEEK) match the Nuclear localization signal motif. Asp-222 functions as the Proton acceptor in the catalytic mechanism. Phosphothreonine; by PDPK1 is present on Thr-256. Residues 356–431 (SLINWEDLIN…SYAPPMDSFL (76 aa)) enclose the AGC-kinase C-terminal domain. Position 369 is a phosphothreonine; by PKA (Thr-369). Residues Ser-397, Ser-401, and Ser-422 each carry the phosphoserine modification.

This sequence belongs to the protein kinase superfamily. AGC Ser/Thr protein kinase family. In terms of assembly, homodimer; disulfide-linked. Forms a trimeric complex with FBXW7 and NOTCH1. Interacts with MAPK3/ERK1, MAPK1/ERK2, MAP2K1/MEK1, MAP2K2/MEK2, NEDD4, NEDD4L, MAPT/TAU, MAPK7, CREB1, SLC9A3R2/NHERF2 and KCNJ1/ROMK1. Associates with the mammalian target of rapamycin complex 2 (mTORC2) via an interaction with MAPKAP1/SIN1. Regulated by phosphorylation. Activated by phosphorylation on Ser-422 by mTORC2, transforming it into a substrate for PDPK1 which phosphorylates it on Thr-256. Phosphorylation on Ser-397 and Ser-401 are also essential for its activity. Phosphorylation on Ser-78 by MAPK7 is required for growth factor-induced cell cycle progression. Post-translationally, ubiquitinated by NEDD4L; which promotes proteasomal degradation. Ubiquitinated by SYVN1 at the endoplasmic reticulum; which promotes rapid proteasomal degradation and maintains a high turnover rate in resting cells.

It localises to the cytoplasm. It is found in the nucleus. Its subcellular location is the endoplasmic reticulum membrane. The protein resides in the cell membrane. The protein localises to the mitochondrion. It catalyses the reaction L-seryl-[protein] + ATP = O-phospho-L-seryl-[protein] + ADP + H(+). The enzyme catalyses L-threonyl-[protein] + ATP = O-phospho-L-threonyl-[protein] + ADP + H(+). With respect to regulation, two specific sites, one in the kinase domain (Thr-256) and the other in the C-terminal regulatory region (Ser-422), need to be phosphorylated for its full activation. Phosphorylation at Ser-397 and Ser-401 are also essential for its activity. Activated by WNK1, WNK2, WNK3 and WNK4; which promote phosphorylation by mTORC2. Serine/threonine-protein kinase which is involved in the regulation of a wide variety of ion channels, membrane transporters, cellular enzymes, transcription factors, neuronal excitability, cell growth, proliferation, survival, migration and apoptosis. Plays an important role in cellular stress response. Contributes to regulation of renal Na(+) retention, renal K(+) elimination, salt appetite, gastric acid secretion, intestinal Na(+)/H(+) exchange and nutrient transport, insulin-dependent salt sensitivity of blood pressure, salt sensitivity of peripheral glucose uptake, cardiac repolarization and memory consolidation. Up-regulates Na(+) channels: SCNN1A/ENAC, SCN5A and ASIC1/ACCN2, K(+) channels: KCNJ1/ROMK1, KCNA1-5, KCNQ1-5 and KCNE1, epithelial Ca(2+) channels: TRPV5 and TRPV6, chloride channels: BSND, CLCN2 and CFTR, glutamate transporters: SLC1A3/EAAT1, SLC1A2 /EAAT2, SLC1A1/EAAT3, SLC1A6/EAAT4 and SLC1A7/EAAT5, amino acid transporters: SLC1A5/ASCT2, SLC38A1/SN1 and SLC6A19, creatine transporter: SLC6A8, Na(+)/dicarboxylate cotransporter: SLC13A2/NADC1, Na(+)-dependent phosphate cotransporter: SLC34A2/NAPI-2B, glutamate receptor: GRIK2/GLUR6. Up-regulates carriers: SLC9A3/NHE3, SLC12A1/NKCC2, SLC12A3/NCC, SLC5A3/SMIT, SLC2A1/GLUT1, SLC5A1/SGLT1 and SLC15A2/PEPT2. Regulates enzymes: GSK3A/B, PMM2 and Na(+)/K(+) ATPase, and transcription factors: CTNNB1 and nuclear factor NF-kappa-B. Stimulates sodium transport into epithelial cells by enhancing the stability and expression of SCNN1A/ENAC. This is achieved by phosphorylating the NEDD4L ubiquitin E3 ligase, promoting its interaction with 14-3-3 proteins, thereby preventing it from binding to SCNN1A/ENAC and targeting it for degradation. Regulates store-operated Ca(+2) entry (SOCE) by stimulating ORAI1 and STIM1. Regulates KCNJ1/ROMK1 directly via its phosphorylation or indirectly via increased interaction with SLC9A3R2/NHERF2. Phosphorylates MDM2 and activates MDM2-dependent ubiquitination of p53/TP53. Phosphorylates MAPT/TAU and mediates microtubule depolymerization and neurite formation in hippocampal neurons. Phosphorylates SLC2A4/GLUT4 and up-regulates its activity. Phosphorylates APBB1/FE65 and promotes its localization to the nucleus. Phosphorylates MAPK1/ERK2 and activates it by enhancing its interaction with MAP2K1/MEK1 and MAP2K2/MEK2. Phosphorylates FBXW7 and plays an inhibitory role in the NOTCH1 signaling. Phosphorylates FOXO1 resulting in its relocalization from the nucleus to the cytoplasm. Phosphorylates FOXO3, promoting its exit from the nucleus and interference with FOXO3-dependent transcription. Phosphorylates BRAF and MAP3K3/MEKK3 and inhibits their activity. Phosphorylates SLC9A3/NHE3 in response to dexamethasone, resulting in its activation and increased localization at the cell membrane. Phosphorylates CREB1. Necessary for vascular remodeling during angiogenesis. The chain is Serine/threonine-protein kinase Sgk1 (SGK1) from Bos taurus (Bovine).